We begin with the raw amino-acid sequence, 195 residues long: Pyridoxal 5'-phosphate synthase subunit PdxT (195 aa).

Residue 55–57 participates in L-glutamine binding; sequence GES. Residue Cys-84 is the Nucleophile of the active site. Residues Arg-111 and 139 to 140 each bind L-glutamine; that span reads IR. Residues His-175 and Glu-177 each act as charge relay system in the active site.

This sequence belongs to the glutaminase PdxT/SNO family. In terms of assembly, in the presence of PdxS, forms a dodecamer of heterodimers. Only shows activity in the heterodimer.

It catalyses the reaction aldehydo-D-ribose 5-phosphate + D-glyceraldehyde 3-phosphate + L-glutamine = pyridoxal 5'-phosphate + L-glutamate + phosphate + 3 H2O + H(+). The enzyme catalyses L-glutamine + H2O = L-glutamate + NH4(+). The protein operates within cofactor biosynthesis; pyridoxal 5'-phosphate biosynthesis. Its function is as follows. Catalyzes the hydrolysis of glutamine to glutamate and ammonia as part of the biosynthesis of pyridoxal 5'-phosphate. The resulting ammonia molecule is channeled to the active site of PdxS. The protein is Pyridoxal 5'-phosphate synthase subunit PdxT of Methanosphaerula palustris (strain ATCC BAA-1556 / DSM 19958 / E1-9c).